A 64-amino-acid polypeptide reads, in one-letter code: Toxin Tce3 (64 aa).

An LCN-type CS-alpha/beta domain is found at 1 to 62 (KDGYIIEHRG…IFDSNNNKCS (62 aa)). Disulfide bonds link Cys-11/Cys-61, Cys-15/Cys-37, Cys-23/Cys-42, and Cys-27/Cys-44.

It belongs to the long (4 C-C) scorpion toxin superfamily. Sodium channel inhibitor family. Beta subfamily. Expressed by the venom gland.

The protein resides in the secreted. Functionally, inhibits the sodium (Nav) currents in an apparent irreversible manner. Produces small depolarization and induces repetitive firing in squid axons. Is specific for arthropods (crickets, triatomides, crabs and squids), but is non-toxic to mice. Shows antibacterial activity against both Gram-positive and Gram-negative bacteria. The polypeptide is Toxin Tce3 (Tityus cerroazul (Scorpion)).